A 335-amino-acid polypeptide reads, in one-letter code: DNA-directed RNA polymerase subunit alpha (335 aa).

The interval 1 to 233 is alpha N-terminal domain (alpha-NTD); sequence MQRNWRELIK…DQLTIFINFE (233 aa). Residues 249-335 form an alpha C-terminal domain (alpha-CTD) region; the sequence is FNDHLFRSVD…DIENRRKEQE (87 aa).

It belongs to the RNA polymerase alpha chain family. In terms of assembly, homodimer. The RNAP catalytic core consists of 2 alpha, 1 beta, 1 beta' and 1 omega subunit. When a sigma factor is associated with the core the holoenzyme is formed, which can initiate transcription.

It catalyses the reaction RNA(n) + a ribonucleoside 5'-triphosphate = RNA(n+1) + diphosphate. Its function is as follows. DNA-dependent RNA polymerase catalyzes the transcription of DNA into RNA using the four ribonucleoside triphosphates as substrates. The sequence is that of DNA-directed RNA polymerase subunit alpha from Syntrophobacter fumaroxidans (strain DSM 10017 / MPOB).